A 60-amino-acid chain; its full sequence is Large ribosomal subunit protein bL32c (60 aa).

This sequence belongs to the bacterial ribosomal protein bL32 family.

It localises to the plastid. It is found in the chloroplast. The chain is Large ribosomal subunit protein bL32c from Psilotum nudum (Whisk fern).